Reading from the N-terminus, the 634-residue chain is 1-deoxy-D-xylulose-5-phosphate synthase (634 aa).

Thiamine diphosphate-binding positions include His74 and 115–117 (AHS). Asp146 serves as a coordination point for Mg(2+). Residues 147–148 (GA), Asn176, Tyr283, and Glu365 each bind thiamine diphosphate. Asn176 contributes to the Mg(2+) binding site.

The protein belongs to the transketolase family. DXPS subfamily. Homodimer. Requires Mg(2+) as cofactor. The cofactor is thiamine diphosphate.

It catalyses the reaction D-glyceraldehyde 3-phosphate + pyruvate + H(+) = 1-deoxy-D-xylulose 5-phosphate + CO2. It functions in the pathway metabolic intermediate biosynthesis; 1-deoxy-D-xylulose 5-phosphate biosynthesis; 1-deoxy-D-xylulose 5-phosphate from D-glyceraldehyde 3-phosphate and pyruvate: step 1/1. Functionally, catalyzes the acyloin condensation reaction between C atoms 2 and 3 of pyruvate and glyceraldehyde 3-phosphate to yield 1-deoxy-D-xylulose-5-phosphate (DXP). The polypeptide is 1-deoxy-D-xylulose-5-phosphate synthase (Burkholderia ambifaria (strain MC40-6)).